Reading from the N-terminus, the 694-residue chain is Two-component response regulator ORR25 (694 aa).

A Response regulatory domain is found at 17–132 (RVLAVDDSPV…DIQNIWQHVW (116 aa)). D68 bears the 4-aspartylphosphate mark. Positions 183-242 (TLKRQRVVWTPELHRDFVIAVHELGVDRAVPRKILRMMKVDYMTRENIASHLQKYRLYLK) constitute an HTH myb-type domain. The segment at residues 213 to 238 (PRKILRMMKVDYMTRENIASHLQKYR) is a DNA-binding region (H-T-H motif). The tract at residues 326-349 (VGHGGSPGNNPVFQPLQNSSNARK) is disordered. A compositionally biased stretch (polar residues) spans 333–347 (GNNPVFQPLQNSSNA).

This sequence belongs to the ARR family. Type-B subfamily. Two-component system major event consists of a His-to-Asp phosphorelay between a sensor histidine kinase (HK) and a response regulator (RR). In plants, the His-to-Asp phosphorelay involves an additional intermediate named Histidine-containing phosphotransfer protein (HPt). This multistep phosphorelay consists of a His-Asp-His-Asp sequential transfer of a phosphate group between first a His and an Asp of the HK protein, followed by the transfer to a conserved His of the HPt protein and finally the transfer to an Asp in the receiver domain of the RR protein.

It localises to the nucleus. Its function is as follows. Transcriptional activator that binds specific DNA sequence. Functions as a response regulator involved in His-to-Asp phosphorelay signal transduction system. Phosphorylation of the Asp residue in the receiver domain activates the ability of the protein to promote the transcription of target genes. May directly activate some type-A response regulators in response to cytokinins. This is Two-component response regulator ORR25 from Oryza sativa subsp. japonica (Rice).